The sequence spans 610 residues: E-selectin (610 aa).

Residues 1–21 form the signal peptide; it reads MIASQFLSALTLVLLIKESGA. Residues 22–139 enclose the C-type lectin domain; sequence WSYNTSTEAM…CSKKKLALCY (118 aa). Residues 22–556 are Extracellular-facing; the sequence is WSYNTSTEAM…CEAPTESNIP (535 aa). Asparagine 25 carries an N-linked (GlcNAc...) asparagine glycan. Cystine bridges form between cysteine 40/cysteine 138, cysteine 111/cysteine 130, cysteine 143/cysteine 154, cysteine 148/cysteine 163, and cysteine 165/cysteine 174. Ca(2+) is bound by residues glutamate 101, asparagine 103, and glutamate 109. Residues 101 to 109, 113 to 118, and 126 to 128 each bind a carbohydrate; these read EPNNRQKDE, EIYIKR, and NDE. 2 residues coordinate Ca(2+): asparagine 126 and aspartate 127. Residues 140-175 enclose the EGF-like domain; that stretch reads TAACTNTSCSGHGECVETINNYTCKCDPGFSGLKCE. Residues asparagine 145 and asparagine 160 are each glycosylated (N-linked (GlcNAc...) asparagine). 6 Sushi domains span residues 178–239, 240–301, 303–364, 366–427, 429–490, and 491–549; these read VNCT…ACNV, VECD…TCKA, TCRA…VCEA, QCTA…TCEA, RCDA…SCQV, and VKCS…TCEA. Asparagine 179, asparagine 199, and asparagine 203 each carry an N-linked (GlcNAc...) asparagine glycan. 14 disulfides stabilise this stretch: cysteine 180–cysteine 224, cysteine 193–cysteine 206, cysteine 210–cysteine 237, cysteine 242–cysteine 286, cysteine 255–cysteine 268, cysteine 272–cysteine 299, cysteine 304–cysteine 349, cysteine 335–cysteine 362, cysteine 367–cysteine 412, cysteine 398–cysteine 425, cysteine 430–cysteine 475, cysteine 461–cysteine 488, cysteine 493–cysteine 534, and cysteine 520–cysteine 547. An N-linked (GlcNAc...) asparagine glycan is attached at asparagine 265. Asparagine 312 and asparagine 332 each carry an N-linked (GlcNAc...) asparagine glycan. Residues asparagine 503 and asparagine 527 are each glycosylated (N-linked (GlcNAc...) asparagine). The helical transmembrane segment at 557-578 threads the bilayer; sequence LVAGLSAAGLSLLTLAPFLLWL. Topologically, residues 579–610 are cytoplasmic; sequence RKCLRKAKKFVPASSCQSLESDGSYQKPSYIL.

The protein belongs to the selectin/LECAM family. In terms of assembly, interacts with SELPLG/PSGL1 and PODXL2 through the sialyl Lewis X epitope. SELPLG sulfation appears not to be required for this interaction.

It localises to the cell membrane. Cell-surface glycoprotein having a role in immunoadhesion. Mediates in the adhesion of blood neutrophils in cytokine-activated endothelium through interaction with SELPLG/PSGL1. May have a role in capillary morphogenesis. In Homo sapiens (Human), this protein is E-selectin (SELE).